The sequence spans 497 residues: Tyrosine-protein kinase SPK-1 (497 aa).

The segment at 1 to 25 is disordered; sequence MGQKFSIKCKKQSKNKNTSKCQKIP. An SH3 domain is found at 33 to 94; the sequence is PGSYMVKAKY…PSNYVSKQDG (62 aa). Residues 100–200 form the SH2 domain; that stretch reads EAWREIQRWE…NTHIPLTDPM (101 aa). In terms of domain architecture, Protein kinase spans 220-482; the sequence is IEILNEIGRG…LVLQEKMDLL (263 aa). ATP contacts are provided by residues 226–234 and Lys-248; that span reads IGRGFFGSV. The Proton acceptor role is filled by Asp-342.

The protein belongs to the protein kinase superfamily. Tyr protein kinase family.

The catalysed reaction is L-tyrosyl-[protein] + ATP = O-phospho-L-tyrosyl-[protein] + ADP + H(+). The polypeptide is Tyrosine-protein kinase SPK-1 (Girardia tigrina (Planarian)).